We begin with the raw amino-acid sequence, 479 residues long: F-box/LRR-repeat protein 16 (479 aa).

A disordered region spans residues 1–92; the sequence is MSSPGIDGDP…GPVSGPPVER (92 aa). Residues 47–60 are compositionally biased toward pro residues; that stretch reads CQPPPPPTLPPPSL. At arginine 92 the chain carries Omega-N-methylarginine. Positions 94–139 constitute an F-box domain; the sequence is PLATDEKILNGLFWYFSACEKCILAQVCKAWRRVLYQPKFWAGLTP. 6 LRR repeats span residues 321 to 342, 347 to 369, 373 to 394, 398 to 419, 423 to 444, and 446 to 470; these read NLTSLSLSGCSKVTDDGVELVA, KLRSLDLSWCPRITDMALEYVAC, RLEELVLDRCVRITDTGLSYLS, SLRSLYLRWCCQVQDFGLKHLL, NLRLLSLAGCPLLTTTGLSGLV, and LQELEELELTNCPGATPELFKYFSQ.

In terms of assembly, interacts with SKP1 and CUL1.

Functionally, substrate-recognition component of the SCF (SKP1-CUL1-F-box protein)-type E3 ubiquitin ligase complex. The protein is F-box/LRR-repeat protein 16 (Fbxl16) of Mus musculus (Mouse).